The following is a 211-amino-acid chain: MLTIALSKGRILDDTLPLLAEAGIVPTENPDKSRKLIIPTTQEDVRLLIVRATDVPTYVEHGAADLGVAGKDVLMEYTGQGLYEPLDLQIAQCKLMTAGKVGAVEPKGRLRVATKFVNVAKRYYAEQGRQVDIIKLYGSMELAPLIGLADKIIDVVDTGNTLRANGLEPQELIATISSRLVVNKASMKMQHARIQALIDTLRKAVESRHRG.

This sequence belongs to the ATP phosphoribosyltransferase family. Short subfamily. In terms of assembly, heteromultimer composed of HisG and HisZ subunits.

It is found in the cytoplasm. It catalyses the reaction 1-(5-phospho-beta-D-ribosyl)-ATP + diphosphate = 5-phospho-alpha-D-ribose 1-diphosphate + ATP. Its pathway is amino-acid biosynthesis; L-histidine biosynthesis; L-histidine from 5-phospho-alpha-D-ribose 1-diphosphate: step 1/9. Functionally, catalyzes the condensation of ATP and 5-phosphoribose 1-diphosphate to form N'-(5'-phosphoribosyl)-ATP (PR-ATP). Has a crucial role in the pathway because the rate of histidine biosynthesis seems to be controlled primarily by regulation of HisG enzymatic activity. The sequence is that of ATP phosphoribosyltransferase from Pseudomonas fluorescens (strain Pf0-1).